We begin with the raw amino-acid sequence, 436 residues long: Phosphomethylpyrimidine synthase (436 aa).

Substrate is bound by residues asparagine 69, methionine 98, tyrosine 127, histidine 163, 185–187 (SRG), 226–229 (DACR), and glutamate 265. Histidine 269 is a binding site for Zn(2+). Tyrosine 292 is a binding site for substrate. Histidine 333 provides a ligand contact to Zn(2+). Positions 409, 412, and 416 each coordinate [4Fe-4S] cluster.

It belongs to the ThiC family. Requires [4Fe-4S] cluster as cofactor.

The catalysed reaction is 5-amino-1-(5-phospho-beta-D-ribosyl)imidazole + S-adenosyl-L-methionine = 4-amino-2-methyl-5-(phosphooxymethyl)pyrimidine + CO + 5'-deoxyadenosine + formate + L-methionine + 3 H(+). The protein operates within cofactor biosynthesis; thiamine diphosphate biosynthesis. In terms of biological role, catalyzes the synthesis of the hydroxymethylpyrimidine phosphate (HMP-P) moiety of thiamine from aminoimidazole ribotide (AIR) in a radical S-adenosyl-L-methionine (SAM)-dependent reaction. The protein is Phosphomethylpyrimidine synthase of Clostridium perfringens (strain SM101 / Type A).